The chain runs to 160 residues: Protein-export protein SecB (160 aa).

It belongs to the SecB family. In terms of assembly, homotetramer, a dimer of dimers. One homotetramer interacts with 1 SecA dimer.

Its subcellular location is the cytoplasm. In terms of biological role, one of the proteins required for the normal export of preproteins out of the cell cytoplasm. It is a molecular chaperone that binds to a subset of precursor proteins, maintaining them in a translocation-competent state. It also specifically binds to its receptor SecA. The polypeptide is Protein-export protein SecB (Aliivibrio salmonicida (strain LFI1238) (Vibrio salmonicida (strain LFI1238))).